The following is a 226-amino-acid chain: Orotate phosphoribosyltransferase (226 aa).

5-phospho-alpha-D-ribose 1-diphosphate is bound by residues Arg107, Lys108, Lys111, and 133 to 141; that span reads EDLTTDGGS. Thr137 serves as a coordination point for orotate.

The protein belongs to the purine/pyrimidine phosphoribosyltransferase family. PyrE subfamily. In terms of assembly, homodimer. The cofactor is Mg(2+).

The enzyme catalyses orotidine 5'-phosphate + diphosphate = orotate + 5-phospho-alpha-D-ribose 1-diphosphate. Its pathway is pyrimidine metabolism; UMP biosynthesis via de novo pathway; UMP from orotate: step 1/2. Functionally, catalyzes the transfer of a ribosyl phosphate group from 5-phosphoribose 1-diphosphate to orotate, leading to the formation of orotidine monophosphate (OMP). This chain is Orotate phosphoribosyltransferase, found in Ruegeria sp. (strain TM1040) (Silicibacter sp.).